Reading from the N-terminus, the 337-residue chain is Receptor like protein kinase S.3 (337 aa).

The Protein kinase domain occupies 50–316; the sequence is FKESELFGTE…VNYLEGNDVL (267 aa). Residues 56-64 and lysine 78 each bind ATP; that span reads FGTEANGTV. Tyrosine 123 is subject to Phosphotyrosine. The active-site Proton acceptor is the aspartate 171.

This sequence belongs to the protein kinase superfamily. Ser/Thr protein kinase family.

The enzyme catalyses L-seryl-[protein] + ATP = O-phospho-L-seryl-[protein] + ADP + H(+). It catalyses the reaction L-threonyl-[protein] + ATP = O-phospho-L-threonyl-[protein] + ADP + H(+). This Arabidopsis thaliana (Mouse-ear cress) protein is Receptor like protein kinase S.3 (LECRKS3).